The sequence spans 277 residues: MVVKIGILKCGNIGMSPVVDLCLDERADRNDIDVRVLGSGAKMGPEQVEEVAKKMVEEVKPDFIVYIGPNPAAPGPKKAREILSAGGIPTVIIGDAPGIKDKDAMAEEGLGYVLIKCDPMIGARRQFLDPVEMAMFNADVIRVLAGTGALRVVQNAIDDMVFAVEEGKEIPLPKIVITEQKAVDAMDFANPYAKAKAMAAFVMAEKVADIDVKGCFMTKEMEKYIPIVASAHEAIRYAAKLVDEARELEKATDAVSRKPHAGEGKILNKCKLMAKPE.

It belongs to the MTD family.

It catalyses the reaction 5,10-methylenetetrahydromethanopterin + oxidized coenzyme F420-(gamma-L-Glu)(n) + 2 H(+) = 5,10-methenyl-5,6,7,8-tetrahydromethanopterin + reduced coenzyme F420-(gamma-L-Glu)(n). It functions in the pathway one-carbon metabolism; methanogenesis from CO(2); 5,10-methylene-5,6,7,8-tetrahydromethanopterin from 5,10-methenyl-5,6,7,8-tetrahydromethanopterin (coenzyme F420 route): step 1/1. Catalyzes the reversible reduction of methenyl-H(4)MPT(+) to methylene-H(4)MPT. The chain is F420-dependent methylenetetrahydromethanopterin dehydrogenase from Methanococcus maripaludis (strain C7 / ATCC BAA-1331).